The chain runs to 252 residues: Protein IL-40 (252 aa).

The signal sequence occupies residues 1 to 18; it reads MALLQLLLFAMLAACGFS. N-linked (GlcNAc...) asparagine glycosylation is found at N82 and N177.

As to expression, expressed in bone marrow, spleen and lymph node.

The protein localises to the secreted. Probable B cell-associated cytokine that plays a role in the regulation of humoral immune responses. Involved in lymphocyte B cell development and immunoglobulin/IgA production. The sequence is that of Protein IL-40 from Mus musculus (Mouse).